The following is a 293-amino-acid chain: uncharacterized protein (293 aa).

Residues 1–22 (MTFNEGVQIDTSTTSTSGSGGG) are disordered. A helical membrane pass occupies residues 25 to 45 (LAIGGGLGGLLVVVVAMLLGV). The segment at 243–265 (GDDRIQQQTTGRTNPETWTHGSA) is disordered. Residues 248 to 265 (QQQTTGRTNPETWTHGSA) show a composition bias toward polar residues.

The protein resides in the membrane. This is an uncharacterized protein from Mycobacterium tuberculosis (strain CDC 1551 / Oshkosh).